The sequence spans 552 residues: Arginine--tRNA ligase (552 aa).

A 'HIGH' region motif is present at residues 123-133 (ANPTGPLTIGR).

This sequence belongs to the class-I aminoacyl-tRNA synthetase family. As to quaternary structure, monomer.

It is found in the cytoplasm. It carries out the reaction tRNA(Arg) + L-arginine + ATP = L-arginyl-tRNA(Arg) + AMP + diphosphate. In Chlorobium phaeovibrioides (strain DSM 265 / 1930) (Prosthecochloris vibrioformis (strain DSM 265)), this protein is Arginine--tRNA ligase.